A 435-amino-acid chain; its full sequence is CBL-interacting protein kinase 28 (435 aa).

One can recognise a Protein kinase domain in the interval 11 to 265 (YVIGRQLGQG…ISRIKRSAWY (255 aa)). Residues 17–25 (LGQGTFGKV) and lysine 40 contribute to the ATP site. Residue aspartate 133 is the Proton acceptor of the active site. The interval 151 to 180 (DFGLSALAESRRQDGLLHTACGTPAYVAPE) is activation loop. The NAF domain occupies 283 to 329 (CTSEAPFSGPTICISSERNQEPPNLHNLNAFDIISLSTGFDLSGLFG). Residues 334–363 (RRESLFTSRKPAAAVLVKLKELAKALNLKV) are PPI.

Belongs to the protein kinase superfamily. CAMK Ser/Thr protein kinase family. SNF1 subfamily. Mn(2+) is required as a cofactor.

The enzyme catalyses L-seryl-[protein] + ATP = O-phospho-L-seryl-[protein] + ADP + H(+). It carries out the reaction L-threonyl-[protein] + ATP = O-phospho-L-threonyl-[protein] + ADP + H(+). In terms of biological role, CIPK serine-threonine protein kinases interact with CBL proteins. Binding of a CBL protein to the regulatory NAF domain of CIPK protein lead to the activation of the kinase in a calcium-dependent manner. The protein is CBL-interacting protein kinase 28 (CIPK28) of Oryza sativa subsp. japonica (Rice).